Consider the following 355-residue polypeptide: Fructose-bisphosphate aldolase, cytoplasmic isozyme (355 aa).

Substrate contacts are provided by R52 and K142. E183 acts as the Proton acceptor in catalysis. Residue K225 is the Schiff-base intermediate with dihydroxyacetone-P of the active site.

The protein belongs to the class I fructose-bisphosphate aldolase family.

The protein resides in the cytoplasm. It catalyses the reaction beta-D-fructose 1,6-bisphosphate = D-glyceraldehyde 3-phosphate + dihydroxyacetone phosphate. The protein operates within carbohydrate degradation; glycolysis; D-glyceraldehyde 3-phosphate and glycerone phosphate from D-glucose: step 4/4. The protein is Fructose-bisphosphate aldolase, cytoplasmic isozyme of Zea mays (Maize).